We begin with the raw amino-acid sequence, 52 residues long: U-scutigerotoxin(01)-Tl1a (52 aa).

A signal peptide spans 1-25; the sequence is MLAKAMSLLMMFLLVLVIGSVMVSA.

The protein belongs to the scutigerotoxin-01 family. Post-translationally, contains 1 disulfide bond. As to expression, expressed by the venom gland.

The protein resides in the secreted. This is U-scutigerotoxin(01)-Tl1a from Thereuopoda longicornis (Long-legged centipede).